The sequence spans 263 residues: Small ribosomal subunit protein eS4 (263 aa).

Residues 42 to 104 (LPLIVFLRNR…TGEHFRLVYD (63 aa)) enclose the S4 RNA-binding domain.

It belongs to the eukaryotic ribosomal protein eS4 family.

The chain is Small ribosomal subunit protein eS4 (RPS4Y1) from Pan paniscus (Pygmy chimpanzee).